The primary structure comprises 510 residues: MNQEMIVVLDFGSQYNQLITRRIREFGVYSELHPHTIRAEEIRALNAKGIIFSGGPNSVYDEQAFTCDPAIFELGLPILGICYGMQLMAHHLGGKVEKATHREYGKALIQVKNDSLLFHGLPDEQVVWMSHGDLVTAPPAGFAVDATSPSCPIAAMSDERRKWYGVQFHPEVRHSVYGNDLLKKFVFEVCGCRGDWTMENFIDEQVRRIREQVGGKKVLCALSGGVDSSVAAVLVHRAIGDQLTCIFVDHGLLRKGEAESVMKTFREQFQMNVIKVDAKDRFLAKLKGVTDPEQKRKIIGNEFIYVFDDEAAKLEGIEFLVQGTLYTDIIESGTATAQTIKSHHNVGGLPEDMKFELIEPLNTLFKDEVRALGTQLGIPDEIVWRQPFPGPGLGIRVLGEVTEEKLEIVRESDAILREEVKKAGLDREIWQYFTVLPDIRSVGVMGDARTYDYTVAIRAVTSIDGMTADWARIPWDVLERISTRIVNEVPHVNRVVYDITSKPPATIEWE.

The Glutamine amidotransferase type-1 domain occupies 5 to 195 (MIVVLDFGSQ…VFEVCGCRGD (191 aa)). Cys-82 functions as the Nucleophile in the catalytic mechanism. Residues His-169 and Glu-171 contribute to the active site. The GMPS ATP-PPase domain occupies 196–385 (WTMENFIDEQ…LGIPDEIVWR (190 aa)). 223–229 (SGGVDSS) provides a ligand contact to ATP.

As to quaternary structure, homodimer.

The catalysed reaction is XMP + L-glutamine + ATP + H2O = GMP + L-glutamate + AMP + diphosphate + 2 H(+). It participates in purine metabolism; GMP biosynthesis; GMP from XMP (L-Gln route): step 1/1. Catalyzes the synthesis of GMP from XMP. The protein is GMP synthase [glutamine-hydrolyzing] of Geobacillus kaustophilus (strain HTA426).